Consider the following 217-residue polypeptide: Growth hormone variant (217 aa).

An N-terminal signal peptide occupies residues 1–26; it reads MAAGSRTSLLLAFGLLCLSWLQEGSA. Disulfide bonds link cysteine 79/cysteine 191 and cysteine 208/cysteine 215. A Phosphoserine modification is found at serine 132. A glycan (N-linked (GlcNAc...) asparagine) is linked at asparagine 166. Serine 176 carries the phosphoserine modification.

The protein belongs to the somatotropin/prolactin family. As to quaternary structure, monomer, dimer, trimer, tetramer and pentamer, disulfide-linked or non-covalently associated, in homomeric and heteromeric combinations. Can also form a complex either with GHBP or with the alpha2-macroglobulin complex. As to expression, expressed in the placenta.

Its subcellular location is the secreted. Plays an important role in growth control. Its major role in stimulating body growth is to stimulate the liver and other tissues to secrete IGF1. It stimulates both the differentiation and proliferation of myoblasts. It also stimulates amino acid uptake and protein synthesis in muscle and other tissues. The sequence is that of Growth hormone variant (GH2) from Homo sapiens (Human).